The primary structure comprises 386 residues: MSDMKAIHFGGGNIGRGFVAEFLHKSGYEVVFVDVMDAIINALQQNKSYTVTEVGTSETKSKTIDNYRAINSKTDEDKVVEEIATADIVTCAVGPNILKFIAPVIAKGIENRKKDSPIAVIACENAIGATDTLRKFIEEKLSDSTKSNIQDKARFANSAIDRIVPMQDENAGLNVKIEKFYEWCVESKPFLPSQPPKIEGVHFVEDLTPFIERKLFTVNTGHATAAYYGYNRGKECIHDVLQDKELNEIVRNTLKETAHLIVNKHEISEEDQNQYVEKIIKRISNPVLKDNVERVGRAPLRKLSRNERFIGPAAHLAEMGAKYDALLGGIEMCLRFQNVEGDDESFELAKILKENSSSDATEKITGLERNHTLFPAVEEVVKKVQA.

6 to 17 is a binding site for NAD(+); it reads AIHFGGGNIGRG. K214 is a catalytic residue.

This sequence belongs to the mannitol dehydrogenase family. Monomer.

The enzyme catalyses D-mannitol 1-phosphate + NAD(+) = beta-D-fructose 6-phosphate + NADH + H(+). Its function is as follows. Catalyzes the NAD(H)-dependent interconversion of D-fructose 6-phosphate and D-mannitol 1-phosphate in the mannitol metabolic pathway. Plays a key role in liamocins biosynthesis by providing the mannitol moity that is linked to 3,5-dihydroxydecanoic acid (provided by the HR-PKS PKS1) via ester bond formation catalyzed by the esterase EST1. The polypeptide is Mannitol-1-phosphate 5-dehydrogenase (Aureobasidium melanogenum (Aureobasidium pullulans var. melanogenum)).